A 105-amino-acid chain; its full sequence is Histone H2A-like 1 (105 aa).

This sequence belongs to the histone H2A family. The nucleosome is a histone octamer containing two molecules each of H2A, H2B, H3 and H4 assembled in one H3-H4 heterotetramer and two H2A-H2B heterodimers. May be incorporated into a proportion of nucleosomes, replacing one or more H2A molecules. Interacts with H2BC1/TH2B; preferentially dimerizes with H2BC1/TH2B to form nucleosomes. In terms of tissue distribution, testis-specific.

It localises to the nucleus. The protein resides in the chromosome. Atypical histone H2A which can replace conventional H2A in some nucleosomes and may play a role during spermatogenesis. Nucleosomes wrap and compact DNA into chromatin, limiting DNA accessibility to the cellular machineries which require DNA as a template. Histones thereby play a central role in transcription regulation, DNA repair, DNA replication and chromosomal stability. DNA accessibility is regulated via a complex set of post-translational modifications of histones, also called histone code, and nucleosome remodeling. In Mus musculus (Mouse), this protein is Histone H2A-like 1.